Reading from the N-terminus, the 251-residue chain is tRNA pseudouridine synthase A (251 aa).

Catalysis depends on Asp-26, which acts as the Nucleophile. Substrate is bound at residue Tyr-98.

Belongs to the tRNA pseudouridine synthase TruA family. In terms of assembly, homodimer.

It carries out the reaction uridine(38/39/40) in tRNA = pseudouridine(38/39/40) in tRNA. Formation of pseudouridine at positions 38, 39 and 40 in the anticodon stem and loop of transfer RNAs. This chain is tRNA pseudouridine synthase A, found in Mycolicibacterium paratuberculosis (strain ATCC BAA-968 / K-10) (Mycobacterium paratuberculosis).